A 205-amino-acid chain; its full sequence is Methylthioribulose-1-phosphate dehydratase (205 aa).

His-94 and His-96 together coordinate Zn(2+).

This sequence belongs to the aldolase class II family. MtnB subfamily. Zn(2+) is required as a cofactor.

The catalysed reaction is 5-(methylsulfanyl)-D-ribulose 1-phosphate = 5-methylsulfanyl-2,3-dioxopentyl phosphate + H2O. It functions in the pathway amino-acid biosynthesis; L-methionine biosynthesis via salvage pathway; L-methionine from S-methyl-5-thio-alpha-D-ribose 1-phosphate: step 2/6. In terms of biological role, catalyzes the dehydration of methylthioribulose-1-phosphate (MTRu-1-P) into 2,3-diketo-5-methylthiopentyl-1-phosphate (DK-MTP-1-P). The polypeptide is Methylthioribulose-1-phosphate dehydratase (Pectobacterium atrosepticum (strain SCRI 1043 / ATCC BAA-672) (Erwinia carotovora subsp. atroseptica)).